The primary structure comprises 328 residues: 4-hydroxythreonine-4-phosphate dehydrogenase (328 aa).

Residues histidine 133 and threonine 134 each contribute to the substrate site. A divalent metal cation-binding residues include histidine 163, histidine 208, and histidine 263. Positions 271, 280, and 289 each coordinate substrate.

It belongs to the PdxA family. Homodimer. It depends on Zn(2+) as a cofactor. Mg(2+) serves as cofactor. Co(2+) is required as a cofactor.

Its subcellular location is the cytoplasm. It carries out the reaction 4-(phosphooxy)-L-threonine + NAD(+) = 3-amino-2-oxopropyl phosphate + CO2 + NADH. Its pathway is cofactor biosynthesis; pyridoxine 5'-phosphate biosynthesis; pyridoxine 5'-phosphate from D-erythrose 4-phosphate: step 4/5. Catalyzes the NAD(P)-dependent oxidation of 4-(phosphooxy)-L-threonine (HTP) into 2-amino-3-oxo-4-(phosphooxy)butyric acid which spontaneously decarboxylates to form 3-amino-2-oxopropyl phosphate (AHAP). The chain is 4-hydroxythreonine-4-phosphate dehydrogenase from Chromobacterium violaceum (strain ATCC 12472 / DSM 30191 / JCM 1249 / CCUG 213 / NBRC 12614 / NCIMB 9131 / NCTC 9757 / MK).